The primary structure comprises 79 residues: uncharacterized protein (79 aa).

The TM2 domain occupies 3-54 (SKKNKIVAALLAFFFGGLGIHKFYLGRVGQGILYILFCWTGIPSIIAFIEFI). A run of 2 helical transmembrane segments spans residues 8 to 28 (IVAALLAFFFGGLGIHKFYLG) and 37 to 57 (ILFCWTGIPSIIAFIEFIIFL).

It is found in the cell membrane. This is an uncharacterized protein from Bacillus subtilis (strain 168).